Reading from the N-terminus, the 193-residue chain is Phosphoheptose isomerase (193 aa).

Residues 37 to 193 enclose the SIS domain; sequence LADSFKAGGK…QLIEKEMVKA (157 aa). Substrate is bound at residue 52 to 54; sequence NGG. Zn(2+) contacts are provided by His-61 and Glu-65. Substrate is bound by residues Glu-65, 93 to 94, 119 to 121, Ser-124, and Gln-172; these read ND and STS. 2 residues coordinate Zn(2+): Gln-172 and His-180.

Belongs to the SIS family. GmhA subfamily. In terms of assembly, homotetramer. The cofactor is Zn(2+).

The protein resides in the cytoplasm. The enzyme catalyses 2 D-sedoheptulose 7-phosphate = D-glycero-alpha-D-manno-heptose 7-phosphate + D-glycero-beta-D-manno-heptose 7-phosphate. It functions in the pathway carbohydrate biosynthesis; D-glycero-D-manno-heptose 7-phosphate biosynthesis; D-glycero-alpha-D-manno-heptose 7-phosphate and D-glycero-beta-D-manno-heptose 7-phosphate from sedoheptulose 7-phosphate: step 1/1. It participates in bacterial outer membrane biogenesis; LPS core biosynthesis. Functionally, catalyzes the isomerization of sedoheptulose 7-phosphate in D-glycero-D-manno-heptose 7-phosphate. The chain is Phosphoheptose isomerase from Yersinia pestis.